The following is a 552-amino-acid chain: Membrane protein insertase YidC (552 aa).

The next 5 membrane-spanning stretches (helical) occupy residues Val7–Gln24, Trp364–Ala384, Leu434–Val454, Pro473–Pro493, and Pro508–Val528.

It belongs to the OXA1/ALB3/YidC family. Type 1 subfamily. Interacts with the Sec translocase complex via SecD. Specifically interacts with transmembrane segments of nascent integral membrane proteins during membrane integration.

The protein localises to the cell inner membrane. Required for the insertion and/or proper folding and/or complex formation of integral membrane proteins into the membrane. Involved in integration of membrane proteins that insert both dependently and independently of the Sec translocase complex, as well as at least some lipoproteins. Aids folding of multispanning membrane proteins. This Burkholderia cenocepacia (strain ATCC BAA-245 / DSM 16553 / LMG 16656 / NCTC 13227 / J2315 / CF5610) (Burkholderia cepacia (strain J2315)) protein is Membrane protein insertase YidC.